A 235-amino-acid chain; its full sequence is Putative N-acetylmannosamine-6-phosphate 2-epimerase (235 aa).

This sequence belongs to the NanE family.

It catalyses the reaction an N-acyl-D-glucosamine 6-phosphate = an N-acyl-D-mannosamine 6-phosphate. The protein operates within amino-sugar metabolism; N-acetylneuraminate degradation; D-fructose 6-phosphate from N-acetylneuraminate: step 3/5. Converts N-acetylmannosamine-6-phosphate (ManNAc-6-P) to N-acetylglucosamine-6-phosphate (GlcNAc-6-P). The chain is Putative N-acetylmannosamine-6-phosphate 2-epimerase from Edwardsiella ictaluri (strain 93-146).